We begin with the raw amino-acid sequence, 212 residues long: 3-demethoxyubiquinol 3-hydroxylase (212 aa).

A disordered region spans residues 21–42; the sequence is SRMSRPLPVPQESAVTEAAPEL. Residues Glu61, Glu91, His94, Glu143, Glu175, and His178 each contribute to the Fe cation site.

It belongs to the COQ7 family. Fe cation serves as cofactor.

The protein resides in the cell membrane. The enzyme catalyses a 5-methoxy-2-methyl-3-(all-trans-polyprenyl)benzene-1,4-diol + AH2 + O2 = a 3-demethylubiquinol + A + H2O. It functions in the pathway cofactor biosynthesis; ubiquinone biosynthesis. Catalyzes the hydroxylation of 2-nonaprenyl-3-methyl-6-methoxy-1,4-benzoquinol during ubiquinone biosynthesis. In Paraburkholderia xenovorans (strain LB400), this protein is 3-demethoxyubiquinol 3-hydroxylase.